Here is a 568-residue protein sequence, read N- to C-terminus: Glucose-6-phosphate isomerase, cytosolic 1 (568 aa).

The Proton donor role is filled by Glu360. Active-site residues include His391 and Lys516.

It belongs to the GPI family. In terms of assembly, homodimer.

Its subcellular location is the cytoplasm. The catalysed reaction is alpha-D-glucose 6-phosphate = beta-D-fructose 6-phosphate. It functions in the pathway carbohydrate degradation; glycolysis; D-glyceraldehyde 3-phosphate and glycerone phosphate from D-glucose: step 2/4. This chain is Glucose-6-phosphate isomerase, cytosolic 1 (PGIC1), found in Clarkia williamsonii.